The following is a 477-amino-acid chain: 3-isopropylmalate dehydratase large subunit (477 aa).

[4Fe-4S] cluster-binding residues include Cys-352, Cys-413, and Cys-416.

The protein belongs to the aconitase/IPM isomerase family. LeuC type 1 subfamily. In terms of assembly, heterodimer of LeuC and LeuD. [4Fe-4S] cluster is required as a cofactor.

The catalysed reaction is (2R,3S)-3-isopropylmalate = (2S)-2-isopropylmalate. It functions in the pathway amino-acid biosynthesis; L-leucine biosynthesis; L-leucine from 3-methyl-2-oxobutanoate: step 2/4. Functionally, catalyzes the isomerization between 2-isopropylmalate and 3-isopropylmalate, via the formation of 2-isopropylmaleate. This Pseudomonas putida (strain GB-1) protein is 3-isopropylmalate dehydratase large subunit.